We begin with the raw amino-acid sequence, 114 residues long: Cytokine SCM-1 beta (114 aa).

An N-terminal signal peptide occupies residues 1-21; that stretch reads MRLLILALLGICSLTAYIVEG. A disulfide bond links cysteine 32 and cysteine 69. The interval 91–114 is disordered; sequence RNNMIQTKPTGTQQSTNTAVTLTG.

It belongs to the intercrine gamma family.

The protein localises to the secreted. In terms of biological role, chemotactic activity for lymphocytes but not for monocytes or neutrophils. This chain is Cytokine SCM-1 beta (XCL2), found in Homo sapiens (Human).